A 69-amino-acid chain; its full sequence is Large ribosomal subunit protein bL28 (69 aa).

It belongs to the bacterial ribosomal protein bL28 family.

This is Large ribosomal subunit protein bL28 from Nitratidesulfovibrio vulgaris (strain DSM 19637 / Miyazaki F) (Desulfovibrio vulgaris).